We begin with the raw amino-acid sequence, 264 residues long: Ribonuclease HII (264 aa).

The region spanning 33–224 (GPVAGVDEVG…VRRVASGSNT (192 aa)) is the RNase H type-2 domain. Residues Asp-39, Glu-40, and Asp-133 each contribute to the a divalent metal cation site. Positions 222-264 (SNTAEVADGQPDPRDGTAQTGEGRWSKSSHPATMRATGRAQGT) are disordered.

This sequence belongs to the RNase HII family. It depends on Mn(2+) as a cofactor. Requires Mg(2+) as cofactor.

The protein resides in the cytoplasm. The catalysed reaction is Endonucleolytic cleavage to 5'-phosphomonoester.. Endonuclease that specifically degrades the RNA of RNA-DNA hybrids. This is Ribonuclease HII from Mycobacterium bovis (strain ATCC BAA-935 / AF2122/97).